The following is a 1522-amino-acid chain: MSPARGDANASVARASGGSSNGAVTADEVVVQVDDSDENRENLRDRDRADKLEKLEKDAHARSQTQTQVQAPPVTVSSFRSANGDAIRAYRSETALTMKPRPRGSTSSTPTTTIPPLRPGRPSSPESPSLKRLSPRYSPTILASRTSRFSNRTGIRDSQSPSPILADEMVGRESLRKRPATSNTPAPKTPTPKNTEWTVDKIASALSVLAEEVPQNHSRLVNFLLEETEKRAPQPRHLSKTDPFAHMKSKAIDANRPRPEGVPTMDVKFKQHSGEYGKSRNSGRRFQYPVVCIKPDREPVPPYRFHHAEIRKNILALNSQLNFVPHLRDVDPNSAEEQKYSAWLMDLENLDSKSGFKIQPRSQKIAKRAQAEYAATLAPYLEPWLRKLNIEGCTKSNLIRFMASQPESDDSMTPQQKSNLLDTYSDDMGSPQAVRNASMFTEAWDRVFNDQSKLRRVALRDILMLDKNVEPIFDNKRAKDAPGSQKPPDEALMQKVIDALGSYTTLGCLICFSHDCEHGEIERDNQKRCFSLEEIGGLMPSLRRKWAAQIEQRQKTEGGSANAPPAHPPCRNECYRIHGTGDPNQQVPPWSENEVGTLEWMFATIGYSQTLRPECFVGAILGRPCWDVHRKLQELDLRLPPVEPRTIPKQKSLPWYDRRKKQLMSDWADATITHEHAVRELFAPCHHDGPCTAANGCPCASAGTHPVLCERFCLCTAEECPLKFTGCACHSSGKTCLQRQREGRPCICVQLNRECDPTLCKGCGARERADPENAYDEVLHSTGCQNVALQRGAAKAVVLGKSQLEACGYGLFAAEDIEEGEFVIEYTGELISHDEGVRREHRRGDVFDEENKVSYLFTLLEQEGIWVDAAIYGNLSRYINHATDGNIMPKIMYVNHEWRIKFTAIKDIKAGEELFFNYGDNFPNLTKKLVERNEQSGAETTPQQPKRANGAATQRATARKTTSKAKGEGIGFDDDDRDGNDSDPDDLWMGDQQQQQQQQQQQQQQQQQQQQQQQQQQQQQQQQQAQKPQPSTSHQPQSRAERSSTETGSEEISPDKQLRRENHDAQRQLLHQFQQQEQQQQQQQQQQQQQQTLPRKEPKKEELEEEIDLDAPRRSRLKRRLEALKGDSSSGGSANEQPPVKKPSRRGGARPGAGRKPKHRPPGAKGKDSKGKKGPSSSAGATTGAGSGESSGVNETGEEEVAVNGKSDSKDEAKEEETDKEKEEDEKVNEKDREKGRDSLSSPTEEPIAFLPVTKSAPSPAKKQASSPTKISDSNRTTSKNTSSNNNNNTNNNNNNNNNEFPSPVISPRKTRSSDHLTNSQPAALSPSATTRKRKASDLTSDTHLSAAGKGSDPSTMTTTTTTTTTTTSSSSSSSSSSSSSSSSSKAQPILEEKGDDDDENNEPITSPLKRQKTSSSLSSSHSMSVFSEAKEGVNGAVPGSGRNLRSSGVKVDSSGLNSTSLSQERGEKHEKHEKEKPKEKKGEKERERERDRSEEADEELLPMDRSMRKRQKPARYRDEGE.

The interval 1-196 is disordered; that stretch reads MSPARGDANA…PKTPTPKNTE (196 aa). Positions 39-61 are enriched in basic and acidic residues; it reads NRENLRDRDRADKLEKLEKDAHA. Composition is skewed to low complexity over residues 64-76 and 103-130; these read QTQTQVQAPPVTV and RGSTSSTPTTTIPPLRPGRPSSPESPSL. Polar residues predominate over residues 141 to 162; the sequence is ILASRTSRFSNRTGIRDSQSPS. Positions 180-195 are enriched in low complexity; it reads ATSNTPAPKTPTPKNT. The SBD domain stretch occupies residues 190–220; the sequence is PTPKNTEWTVDKIASALSVLAEEVPQNHSRL. The EBD domain stretch occupies residues 221–250; it reads VNFLLEETEKRAPQPRHLSKTDPFAHMKSK. The interval 251–300 is BAM domain; that stretch reads AIDANRPRPEGVPTMDVKFKQHSGEYGKSRNSGRRFQYPVVCIKPDREPV. Residues 301–320 form an SAL domain region; the sequence is PPYRFHHAEIRKNILALNSQ. Residues 321–360 are SRM domain; sequence LNFVPHLRDVDPNSAEEQKYSAWLMDLENLDSKSGFKIQP. An SANT1L domain region spans residues 361–480; sequence RSQKIAKRAQ…PIFDNKRAKD (120 aa). Residues 406-426 form a disordered region; that stretch reads PESDDSMTPQQKSNLLDTYSD. Over residues 411–422 the composition is skewed to polar residues; it reads SMTPQQKSNLLD. Residues 481 to 560 are MCSS domain; it reads APGSQKPPDE…EQRQKTEGGS (80 aa). Residues Cys-508, Cys-511, Cys-516, His-518, Cys-570, Cys-574, Cys-615, Cys-625, Cys-685, His-687, Cys-691, Cys-697, Cys-699, Cys-709, Cys-713, Cys-715, Cys-720, Cys-727, Cys-729, Cys-736, Cys-746, Cys-748, Cys-755, Cys-760, Cys-763, and Cys-784 each coordinate Zn(2+). An SANT2L domain region spans residues 561-650; the sequence is ANAPPAHPPC…PVEPRTIPKQ (90 aa). The 123-residue stretch at 658–780 folds into the CXC domain; that stretch reads RRKKQLMSDW…PENAYDEVLH (123 aa). Positions 795–919 constitute an SET domain; the sequence is KAVVLGKSQL…AGEELFFNYG (125 aa). The S-adenosyl-L-homocysteine site is built by Tyr-809, Lys-852, Ser-854, and Tyr-855. S-adenosyl-L-methionine contacts are provided by Tyr-809, Lys-852, Ser-854, Tyr-855, Asn-880, His-881, and Thr-926. His-881 serves as a coordination point for S-adenosyl-L-homocysteine. Lys-927 lines the S-adenosyl-L-homocysteine pocket. The segment at 933–1522 is disordered; it reads NEQSGAETTP…KPARYRDEGE (590 aa). Residues 935–946 show a composition bias toward polar residues; it reads QSGAETTPQQPK. The span at 971-988 shows a compositional bias: acidic residues; it reads GFDDDDRDGNDSDPDDLW. Low complexity predominate over residues 992–1024; it reads QQQQQQQQQQQQQQQQQQQQQQQQQQQQQQQQQ. Over residues 1025 to 1038 the composition is skewed to polar residues; sequence AQKPQPSTSHQPQS. The segment covering 1053-1066 has biased composition (basic and acidic residues); the sequence is SPDKQLRRENHDAQ. A compositionally biased stretch (low complexity) spans 1072–1091; that stretch reads QFQQQEQQQQQQQQQQQQQQ. Positions 1127–1136 are enriched in polar residues; that stretch reads DSSSGGSANE. Positions 1142-1162 are enriched in basic residues; it reads KPSRRGGARPGAGRKPKHRPP. 2 stretches are compositionally biased toward basic and acidic residues: residues 1207–1221 and 1228–1238; these read SDSKDEAKEEETDKE and VNEKDREKGRD. Low complexity predominate over residues 1255 to 1299; sequence KSAPSPAKKQASSPTKISDSNRTTSKNTSSNNNNNTNNNNNNNNN. A compositionally biased stretch (polar residues) spans 1316–1330; the sequence is HLTNSQPAALSPSAT. 2 stretches are compositionally biased toward low complexity: residues 1355 to 1385 and 1415 to 1428; these read STMTTTTTTTTTTTSSSSSSSSSSSSSSSSS and SSSLSSSHSMSVFS. Positions 1455 to 1464 are enriched in polar residues; the sequence is SGLNSTSLSQ. Over residues 1465–1494 the composition is skewed to basic and acidic residues; the sequence is ERGEKHEKHEKEKPKEKKGEKERERERDRS.

Belongs to the class V-like SAM-binding methyltransferase superfamily. Histone-lysine methyltransferase family. EZ subfamily. As to quaternary structure, component of the polycomb repressive complex 2 (PRC2) that consists of four core subunits icluding EZH2, EED, SUZ12, and RBBP4, among which EZH2 is the catalytic subunit and which minimally requires EED and SUZ12 for catalysis.

Its subcellular location is the nucleus. It catalyses the reaction L-lysyl(27)-[histone H3] + 3 S-adenosyl-L-methionine = N(6),N(6),N(6)-trimethyl-L-lysyl(27)-[histone H3] + 3 S-adenosyl-L-homocysteine + 3 H(+). The end product of PRC2 catalysis, H3K27me3, interacts with EED to stimulate the enzymatic activity of PRC2 allosterically. The enzymatic activity of PRC2 is regulated in a very complex manner and PCR2 can adopt different stages including the autoinhibited (A); SAM-bound autoinhibited (A'), basal (B), and H3K27me3-stimulated (S) stages. Actictivity is inhibited by pyridone inhibitors such as GSK126. Catalytic subunit of the of the Polycomb Repressive Complex 2 (PRC2), a histone H3 lysine methyltransferase responsible for generating mono-, di-, and tri-methylation on Lys27 (H3K27me1, H3K27me2 and H3K27me3). The tri-methylated form is known to be critical in gene repression, and its proper placement is essential in defining repression patterns during development. The PRC2 complex interacts with thousands of RNA species in vivo, but the physiological function of RNA binding has still to be determined. This is Histone-lysine N-methyltransferase EZH2 from Chaetomium thermophilum (strain DSM 1495 / CBS 144.50 / IMI 039719) (Thermochaetoides thermophila).